Here is a 324-residue protein sequence, read N- to C-terminus: Holliday junction branch migration complex subunit RuvB (324 aa).

The segment at 1–168 is large ATPase domain (RuvB-L); that stretch reads MEDLALRPKT…FGIVEHLEYY (168 aa). The ATP site is built by Tyr14, Ile15, Gly48, Lys51, Thr52, Thr53, Asp97, Thr146, Tyr168, and Arg205. Thr52 is a binding site for Mg(2+). The segment at 169–239 is small ATPAse domain (RuvB-S); sequence TPEELAQGVM…RALEALAALG (71 aa). Positions 242–324 are head domain (RuvB-H); it reads ELGLEKRDRE…PPPVGPLLEP (83 aa). Positions 297 and 302 each coordinate DNA.

This sequence belongs to the RuvB family. In terms of assembly, homohexamer. Forms a complex with RuvA. Electron microscopic images suggest 2 closely interacting RuvA tetramers sandwich the HJ DNA; each tetramer associates with an RuvB hexamer. Forms 2 complexes with Holliday junction (HJ) DNA which probably have 1 and 2 RuvA tetramers per complex (called complex I and complex II). Forms an RuvA(8)-RuvB(12)-Holliday junction (HJ) complex. HJ DNA is sandwiched between 2 RuvA tetramers; dsDNA enters through RuvA and exits via RuvB. An RuvB hexamer assembles on each DNA strand where it exits the tetramer. Each RuvB hexamer is contacted by two RuvA subunits (via domain III) on 2 adjacent RuvB subunits; this complex drives branch migration. In the full resolvosome a probable DNA-RuvA(4)-RuvB(12)-RuvC(2) complex forms which resolves the HJ. Mg(2+) serves as cofactor.

Its subcellular location is the cytoplasm. The catalysed reaction is ATP + H2O = ADP + phosphate + H(+). Its activity is regulated as follows. The activity of RuvB is enhanced by E.coli RuvA. Functionally, the RuvA-RuvB-RuvC complex processes Holliday junction (HJ) DNA during genetic recombination and DNA repair, while the RuvA-RuvB complex plays an important role in the rescue of blocked DNA replication forks via replication fork reversal (RFR). RuvA specifically binds to HJ cruciform DNA, conferring on it an open structure. The RuvB hexamer acts as an ATP-dependent pump, pulling dsDNA into and through the RuvAB complex. RuvB forms 2 homohexamers on either side of HJ DNA bound by 1 or 2 RuvA tetramers; 4 subunits per hexamer contact DNA at a time. Coordinated motions by a converter formed by DNA-disengaged RuvB subunits stimulates ATP hydrolysis and nucleotide exchange. Immobilization of the converter enables RuvB to convert the ATP-contained energy into a lever motion, pulling 2 nucleotides of DNA out of the RuvA tetramer per ATP hydrolyzed, thus driving DNA branch migration. The RuvB motors rotate together with the DNA substrate, which together with the progressing nucleotide cycle form the mechanistic basis for DNA recombination by continuous HJ branch migration. Branch migration allows RuvC to scan DNA until it finds its consensus sequence, where it cleaves and resolves cruciform DNA. RuvB is a Mg(2+)-dependent, DNA-dependent ATPase with an equal preference for supercoiled and linear dsDNA; all (d)NTPs tested were efficiently hydrolyzed. Promotes Holliday junction (HJ) dissociation at 60 degrees Celsius in the presence of ATP but not ATP-gamma-S or ADP; (d)ATP, (d)CTP and dTTP also power dissociation in the absence of any RuvA. RuvA stimulates the ATPase of RuvB in the presence of dsDNA and HJ branch migration by RuvB. Excess RuvB stimulates some branch migration in vitro even in the presence of mutant RuvA. This Thermus thermophilus (strain ATCC 27634 / DSM 579 / HB8) protein is Holliday junction branch migration complex subunit RuvB.